The sequence spans 154 residues: Ribosome maturation factor RimP (154 aa).

This sequence belongs to the RimP family.

The protein resides in the cytoplasm. Required for maturation of 30S ribosomal subunits. This is Ribosome maturation factor RimP from Acetivibrio thermocellus (strain ATCC 27405 / DSM 1237 / JCM 9322 / NBRC 103400 / NCIMB 10682 / NRRL B-4536 / VPI 7372) (Clostridium thermocellum).